Reading from the N-terminus, the 136-residue chain is Probable endoribonuclease MazF7 (136 aa).

The interval 115–136 (TGPERGEAATHSPVRWTGGRDP) is disordered.

Belongs to the PemK/MazF family. Forms a complex with cognate antitoxin MazE7.

In terms of biological role, toxic component of a type II toxin-antitoxin (TA) system. Upon expression in E.coli and M.smegmatis inhibits cell growth and colony formation. Its toxic effect is neutralized by coexpression with cognate antitoxin MazE7. Probably an endoribonuclease. This chain is Probable endoribonuclease MazF7 (mazF7), found in Mycobacterium tuberculosis (strain ATCC 25618 / H37Rv).